An 84-amino-acid chain; its full sequence is U2-theraphotoxin-Cg1b 1 (84 aa).

An N-terminal signal peptide occupies residues 1–21; that stretch reads MKVSVLITLAVWGVMFLLTSA. Residues 22–48 constitute a propeptide that is removed on maturation; sequence QERGSDQMDSPAWLKSMERIFQSEERE. Intrachain disulfides connect Cys49-Cys63, Cys56-Cys68, and Cys62-Cys76.

It belongs to the neurotoxin 10 (Hwtx-1) family. 06 (F4b) subfamily. Expressed by the venom gland.

It is found in the secreted. In terms of biological role, probable ion channel inhibitor. This chain is U2-theraphotoxin-Cg1b 1, found in Chilobrachys guangxiensis (Chinese earth tiger tarantula).